The sequence spans 199 residues: DnaJ homolog subfamily C member 5B (199 aa).

2 positions are modified to phosphoserine: serine 14 and serine 16. The 66-residue stretch at serine 19–glycine 84 folds into the J domain.

In terms of assembly, interacts with the chaperone complex consisting of HSC70 and SGTA. In terms of processing, palmitoylated.

The protein localises to the membrane. The protein is DnaJ homolog subfamily C member 5B (Dnajc5b) of Mus musculus (Mouse).